A 136-amino-acid polypeptide reads, in one-letter code: Large ribosomal subunit protein bL20 (136 aa).

Belongs to the bacterial ribosomal protein bL20 family.

In terms of biological role, binds directly to 23S ribosomal RNA and is necessary for the in vitro assembly process of the 50S ribosomal subunit. It is not involved in the protein synthesizing functions of that subunit. The sequence is that of Large ribosomal subunit protein bL20 from Tropheryma whipplei (strain Twist) (Whipple's bacillus).